A 182-amino-acid polypeptide reads, in one-letter code: Triplatin (182 aa).

The N-terminal stretch at 1–18 (MKMIIAVTFLGIVTIAFA) is a signal peptide. Disulfide bonds link Cys-21–Cys-133, Cys-55–Cys-177, and Cys-88–Cys-105.

The protein belongs to the calycin superfamily. Triabin family. In terms of tissue distribution, expressed in salivary glands.

The protein resides in the secreted. Inhibits platelet aggregation and vasoconstriction through binding to distinct eicosanoids involved in inflammation (acts as a scavenger), and has a role in inhibiting host innate immunity by impairing platelet-assisted formation of neutrophil extracellular traps (NETs). Inhibits platelet aggregation by collagen, and low doses of thromboxane A2 mimetic (TXA2 mimetic), and arachidonic acid (AA) without affecting aggregation induced by ADP, convulxin (GP6 agonist), and PMA. Binds to TXA2, TXB2, prostaglandine H2 mimetic (PGH2 mimetic), PGJ2, and PGF2alpha. Binding is not observed to leukotrienes, AA, and biogenic amines (PGE1, 5(S)-HETE, 12(S)-HETE, 20-HETE, norepinephrine, epinephrine, serotonin, LTC4 and ADP). Induces relaxation of aorta rat previously contracted with TXA2 mimetic. Moreover, it also impairs platelet-assisted formation of neutrophil extracellular traps (NETs). NETs are web-like structures of DNA and proteins that play an important role in killing of pathogens. In addition, NETs are implicated in thrombus formation. In vivo, this protein exhibits antithrombotic activity in two distinct mice models that are highly dependent on platelets. It is noteworthy that it inhibits thrombosis without promoting excessive bleeding. The sequence is that of Triplatin from Triatoma infestans (Assassin bug).